The chain runs to 197 residues: Glycerol-3-phosphate acyltransferase (197 aa).

5 consecutive transmembrane segments (helical) span residues 7–27, 55–75, 78–98, 116–136, and 157–177; these read TLLP…LILT, GLAA…VLIV, VWPG…CFPV, LALA…VLFL, and VLGY…VLYL.

This sequence belongs to the PlsY family. Probably interacts with PlsX.

It localises to the cell inner membrane. It carries out the reaction an acyl phosphate + sn-glycerol 3-phosphate = a 1-acyl-sn-glycero-3-phosphate + phosphate. The protein operates within lipid metabolism; phospholipid metabolism. Its function is as follows. Catalyzes the transfer of an acyl group from acyl-phosphate (acyl-PO(4)) to glycerol-3-phosphate (G3P) to form lysophosphatidic acid (LPA). This enzyme utilizes acyl-phosphate as fatty acyl donor, but not acyl-CoA or acyl-ACP. This is Glycerol-3-phosphate acyltransferase from Novosphingobium aromaticivorans (strain ATCC 700278 / DSM 12444 / CCUG 56034 / CIP 105152 / NBRC 16084 / F199).